Here is a 165-residue protein sequence, read N- to C-terminus: Large ribosomal subunit protein uL10 (165 aa).

It belongs to the universal ribosomal protein uL10 family. In terms of assembly, part of the ribosomal stalk of the 50S ribosomal subunit. The N-terminus interacts with L11 and the large rRNA to form the base of the stalk. The C-terminus forms an elongated spine to which L12 dimers bind in a sequential fashion forming a multimeric L10(L12)X complex.

Forms part of the ribosomal stalk, playing a central role in the interaction of the ribosome with GTP-bound translation factors. This chain is Large ribosomal subunit protein uL10, found in Paraburkholderia phymatum (strain DSM 17167 / CIP 108236 / LMG 21445 / STM815) (Burkholderia phymatum).